Here is a 250-residue protein sequence, read N- to C-terminus: 5-oxoprolinase subunit A (250 aa).

The protein belongs to the LamB/PxpA family. As to quaternary structure, forms a complex composed of PxpA, PxpB and PxpC.

The enzyme catalyses 5-oxo-L-proline + ATP + 2 H2O = L-glutamate + ADP + phosphate + H(+). Catalyzes the cleavage of 5-oxoproline to form L-glutamate coupled to the hydrolysis of ATP to ADP and inorganic phosphate. The sequence is that of 5-oxoprolinase subunit A from Thermus thermophilus (strain ATCC BAA-163 / DSM 7039 / HB27).